The sequence spans 294 residues: Proteasome subunit beta 1 (294 aa).

The propeptide at 1 to 65 (MTADRPALRT…MESGDLAPHG (65 aa)) is removed in mature form; by autocatalysis. The active-site Nucleophile is the Thr-66.

Belongs to the peptidase T1B family. As to quaternary structure, the 20S proteasome core is composed of 14 alpha and 14 beta subunits that assemble into four stacked heptameric rings, resulting in a barrel-shaped structure. The two inner rings, each composed of seven catalytic beta subunits, are sandwiched by two outer rings, each composed of seven alpha subunits. All four combinations of alpha- and beta-subunits (beta2-alpha1, beta2-alpha2, beta1-alpha2 and beta1-alpha1) yield fully assembled and proteolytically active proteasomes. The catalytic chamber with the active sites is on the inside of the barrel. Has probably a gated structure, the ends of the cylinder being occluded by the N-termini of the alpha-subunits. Is likely capped by the proteasome-associated ATPase, ARC.

The protein resides in the cytoplasm. It carries out the reaction Cleavage of peptide bonds with very broad specificity.. The protein operates within protein degradation; proteasomal Pup-dependent pathway. The formation of the proteasomal ATPase ARC-20S proteasome complex, likely via the docking of the C-termini of ARC into the intersubunit pockets in the alpha-rings, may trigger opening of the gate for substrate entry. Interconversion between the open-gate and close-gate conformations leads to a dynamic regulation of the 20S proteasome proteolysis activity. Its function is as follows. Component of the proteasome core, a large protease complex with broad specificity involved in protein degradation. The R.erythropolis proteasomes are able to cleave oligopeptides after Tyr, Phe and Leu, very poorly after Arg but not after Glu. Thus, displays chymotrypsin-like activity, low trypsin-like activity but no caspase-like activity. This is Proteasome subunit beta 1 from Rhodococcus erythropolis (Arthrobacter picolinophilus).